We begin with the raw amino-acid sequence, 275 residues long: ATP synthase subunit delta (275 aa).

It belongs to the ATPase delta chain family. As to quaternary structure, F-type ATPases have 2 components, F(1) - the catalytic core - and F(0) - the membrane proton channel. F(1) has five subunits: alpha(3), beta(3), gamma(1), delta(1), epsilon(1). F(0) has three main subunits: a(1), b(2) and c(10-14). The alpha and beta chains form an alternating ring which encloses part of the gamma chain. F(1) is attached to F(0) by a central stalk formed by the gamma and epsilon chains, while a peripheral stalk is formed by the delta and b chains.

The protein resides in the cell membrane. In terms of biological role, f(1)F(0) ATP synthase produces ATP from ADP in the presence of a proton or sodium gradient. F-type ATPases consist of two structural domains, F(1) containing the extramembraneous catalytic core and F(0) containing the membrane proton channel, linked together by a central stalk and a peripheral stalk. During catalysis, ATP synthesis in the catalytic domain of F(1) is coupled via a rotary mechanism of the central stalk subunits to proton translocation. This protein is part of the stalk that links CF(0) to CF(1). It either transmits conformational changes from CF(0) to CF(1) or is implicated in proton conduction. This chain is ATP synthase subunit delta, found in Nocardioides sp. (strain ATCC BAA-499 / JS614).